A 129-amino-acid polypeptide reads, in one-letter code: Small ribosomal subunit protein uS9 (129 aa).

Positions 108 to 129 are disordered; that stretch reads RMVERKKYGKKKARKSFQFSKR. Residues 114-129 show a composition bias toward basic residues; sequence KYGKKKARKSFQFSKR.

Belongs to the universal ribosomal protein uS9 family.

This is Small ribosomal subunit protein uS9 from Chlorobaculum tepidum (strain ATCC 49652 / DSM 12025 / NBRC 103806 / TLS) (Chlorobium tepidum).